A 192-amino-acid polypeptide reads, in one-letter code: Holliday junction branch migration complex subunit RuvA (192 aa).

The tract at residues Met1–Leu61 is domain I. The domain II stretch occupies residues Ser62 to Thr137. The segment at Thr137 to Ala140 is flexible linker. A domain III region spans residues Asp141–Lys192.

Belongs to the RuvA family. In terms of assembly, homotetramer. Forms an RuvA(8)-RuvB(12)-Holliday junction (HJ) complex. HJ DNA is sandwiched between 2 RuvA tetramers; dsDNA enters through RuvA and exits via RuvB. An RuvB hexamer assembles on each DNA strand where it exits the tetramer. Each RuvB hexamer is contacted by two RuvA subunits (via domain III) on 2 adjacent RuvB subunits; this complex drives branch migration. In the full resolvosome a probable DNA-RuvA(4)-RuvB(12)-RuvC(2) complex forms which resolves the HJ.

It localises to the cytoplasm. In terms of biological role, the RuvA-RuvB-RuvC complex processes Holliday junction (HJ) DNA during genetic recombination and DNA repair, while the RuvA-RuvB complex plays an important role in the rescue of blocked DNA replication forks via replication fork reversal (RFR). RuvA specifically binds to HJ cruciform DNA, conferring on it an open structure. The RuvB hexamer acts as an ATP-dependent pump, pulling dsDNA into and through the RuvAB complex. HJ branch migration allows RuvC to scan DNA until it finds its consensus sequence, where it cleaves and resolves the cruciform DNA. The protein is Holliday junction branch migration complex subunit RuvA of Lactobacillus johnsonii (strain CNCM I-12250 / La1 / NCC 533).